The primary structure comprises 510 residues: MYELHIKPGQLTLSQLRKISRHALKVSLESSCIEAIHASTQVVNQVIAENRVAYGINTGFGLLANTRIAPEDLETLQRSIVLSHAAGIGELMNDETVRMMMVLKINSLARGFSGIRLSVIEALMTLVNAQIYPCVPKKGSVGASGDLAPLAHMSTVLLGEGEARYQGNIISGAKALEIAGMQPITLAPKEGLALLNGTQASCAFGLEGLFAAEDLFASATLCGAMTVDAALGSRRPFDDRVHQVRGHQSQIDSALIYRHILDTHSEVSHSHTACEKVQDPYSLRCQPQVMGACLQQIRNSAAIYEIEANSVSDNPLVFAEDGDIISAGNFHAEPIAMASDNLALAIAEIGSLSERRMALLIDNSLSKLPPFLVNNGGVNSGFMIAQVTAAALASENKSLAHPACVDSLPTSANQEDHVSMATFAGRRLKEMAENTRGILAVELLAAAQGLDFRSPLKSSELIETAKAELRERVDFYDKDRYFAPDIKQANQLLIEAMHNKLIPEGLLPSL.

Positions 143–145 form a cross-link, 5-imidazolinone (Ala-Gly); the sequence is ASG. A 2,3-didehydroalanine (Ser) modification is found at Ser144.

The protein belongs to the PAL/histidase family. In terms of processing, contains an active site 4-methylidene-imidazol-5-one (MIO), which is formed autocatalytically by cyclization and dehydration of residues Ala-Ser-Gly.

It localises to the cytoplasm. The enzyme catalyses L-histidine = trans-urocanate + NH4(+). It functions in the pathway amino-acid degradation; L-histidine degradation into L-glutamate; N-formimidoyl-L-glutamate from L-histidine: step 1/3. The sequence is that of Histidine ammonia-lyase from Psychromonas ingrahamii (strain DSM 17664 / CCUG 51855 / 37).